The chain runs to 353 residues: Uroporphyrinogen decarboxylase (353 aa).

Substrate contacts are provided by residues 29–33, aspartate 78, tyrosine 154, serine 209, and histidine 322; that span reads RQAGR.

This sequence belongs to the uroporphyrinogen decarboxylase family. As to quaternary structure, homodimer.

The protein localises to the cytoplasm. The enzyme catalyses uroporphyrinogen III + 4 H(+) = coproporphyrinogen III + 4 CO2. Its pathway is porphyrin-containing compound metabolism; protoporphyrin-IX biosynthesis; coproporphyrinogen-III from 5-aminolevulinate: step 4/4. Its function is as follows. Catalyzes the decarboxylation of four acetate groups of uroporphyrinogen-III to yield coproporphyrinogen-III. This is Uroporphyrinogen decarboxylase from Bacillus velezensis (strain DSM 23117 / BGSC 10A6 / LMG 26770 / FZB42) (Bacillus amyloliquefaciens subsp. plantarum).